The following is a 195-amino-acid chain: Imidazoleglycerol-phosphate dehydratase (195 aa).

It belongs to the imidazoleglycerol-phosphate dehydratase family.

The protein resides in the cytoplasm. It carries out the reaction D-erythro-1-(imidazol-4-yl)glycerol 3-phosphate = 3-(imidazol-4-yl)-2-oxopropyl phosphate + H2O. It participates in amino-acid biosynthesis; L-histidine biosynthesis; L-histidine from 5-phospho-alpha-D-ribose 1-diphosphate: step 6/9. The polypeptide is Imidazoleglycerol-phosphate dehydratase (Burkholderia pseudomallei (strain 1710b)).